We begin with the raw amino-acid sequence, 476 residues long: Ankyrin repeat, SAM and basic leucine zipper domain-containing protein 1 (476 aa).

S18 and S21 each carry phosphoserine. 6 ANK repeats span residues 46–75 (EKNE…SIDS), 79–108 (YGWT…NASF), 111–145 (DKQT…DPNV), 149–178 (RLMT…EVNT), 182–211 (NGYT…DKML), and 215–244 (DGKT…PLEG). In terms of domain architecture, SAM spans 273-335 (SYAAFEDLEI…KILAALKELE (63 aa)).

In terms of assembly, interacts with DDX4, PIWIL1, RANBP9 and TDRD1.

The protein resides in the cytoplasm. Its function is as follows. Plays a central role during spermatogenesis by repressing transposable elements and preventing their mobilization, which is essential for the germline integrity. Acts via the piRNA metabolic process, which mediates the repression of transposable elements during meiosis by forming complexes composed of piRNAs and Piwi proteins and governs the methylation and subsequent repression of transposons. Its association with pi-bodies suggests a participation in the primary piRNAs metabolic process. Required prior to the pachytene stage to facilitate the production of multiple types of piRNAs, including those associated with repeats involved in the regulation of retrotransposons. May act by mediating protein-protein interactions during germ cell maturation. The polypeptide is Ankyrin repeat, SAM and basic leucine zipper domain-containing protein 1 (ASZ1) (Dasypus novemcinctus (Nine-banded armadillo)).